A 1191-amino-acid polypeptide reads, in one-letter code: DNA topoisomerase 2 (1191 aa).

ATP is bound by residues asparagine 64, asparagine 95, and glycine 142–lysine 149. 3 residues coordinate Mg(2+): glutamate 437, aspartate 538, and aspartate 540. One can recognise a Topo IIA-type catalytic domain in the interval isoleucine 706–isoleucine 1173. Tyrosine 799 acts as the O-(5'-phospho-DNA)-tyrosine intermediate in catalysis.

The protein belongs to the type II topoisomerase family. Requires Mg(2+) as cofactor. Mn(2+) serves as cofactor. Ca(2+) is required as a cofactor.

It is found in the host cytoplasm. It carries out the reaction ATP-dependent breakage, passage and rejoining of double-stranded DNA.. Its function is as follows. Type II topoisomerase. Processively relaxes supercoiled DNA. Displays DNA-supercoiling activity only when associated with the viral histone-like protein. The polypeptide is DNA topoisomerase 2 (Ornithodoros (relapsing fever ticks)).